A 224-amino-acid chain; its full sequence is Aminopyrimidine aminohydrolase (224 aa).

Residue D44 participates in substrate binding. Residue C135 is the Nucleophile of the active site. Substrate-binding residues include Y139 and Y165. The active-site Proton donor is E207.

Belongs to the TenA family. In terms of assembly, homotetramer.

It catalyses the reaction 4-amino-5-aminomethyl-2-methylpyrimidine + H2O = 4-amino-5-hydroxymethyl-2-methylpyrimidine + NH4(+). The enzyme catalyses thiamine + H2O = 5-(2-hydroxyethyl)-4-methylthiazole + 4-amino-5-hydroxymethyl-2-methylpyrimidine + H(+). The protein operates within cofactor biosynthesis; thiamine diphosphate biosynthesis. Catalyzes an amino-pyrimidine hydrolysis reaction at the C5' of the pyrimidine moiety of thiamine compounds, a reaction that is part of a thiamine salvage pathway. Thus, catalyzes the conversion of 4-amino-5-aminomethyl-2-methylpyrimidine to 4-amino-5-hydroxymethyl-2-methylpyrimidine (HMP). To a lesser extent, is also able to catalyze the hydrolytic cleavage of thiamine; however, this thiaminase activity is unlikely to be physiologically relevant. Therefore, is involved in the regeneration of the thiamine pyrimidine from thiamine degraded products present in the environment, rather than in thiamine degradation. The polypeptide is Aminopyrimidine aminohydrolase (Halalkalibacterium halodurans (strain ATCC BAA-125 / DSM 18197 / FERM 7344 / JCM 9153 / C-125) (Bacillus halodurans)).